The sequence spans 339 residues: N-acetyl-gamma-glutamyl-phosphate reductase (339 aa).

Cys-144 is a catalytic residue.

The protein belongs to the NAGSA dehydrogenase family. Type 1 subfamily.

It localises to the cytoplasm. The catalysed reaction is N-acetyl-L-glutamate 5-semialdehyde + phosphate + NADP(+) = N-acetyl-L-glutamyl 5-phosphate + NADPH + H(+). It participates in amino-acid biosynthesis; L-arginine biosynthesis; N(2)-acetyl-L-ornithine from L-glutamate: step 3/4. In terms of biological role, catalyzes the NADPH-dependent reduction of N-acetyl-5-glutamyl phosphate to yield N-acetyl-L-glutamate 5-semialdehyde. This is N-acetyl-gamma-glutamyl-phosphate reductase from Methanobrevibacter smithii (strain ATCC 35061 / DSM 861 / OCM 144 / PS).